Reading from the N-terminus, the 80-residue chain is uncharacterized protein (80 aa).

It belongs to the BolA/IbaG family.

This is an uncharacterized protein from Buchnera aphidicola subsp. Schizaphis graminum (strain Sg).